We begin with the raw amino-acid sequence, 88 residues long: UPF0297 protein SGO_2042 (88 aa).

This sequence belongs to the UPF0297 family.

The polypeptide is UPF0297 protein SGO_2042 (Streptococcus gordonii (strain Challis / ATCC 35105 / BCRC 15272 / CH1 / DL1 / V288)).